The primary structure comprises 100 residues: Small ribosomal subunit protein uS14c (100 aa).

It belongs to the universal ribosomal protein uS14 family. Part of the 30S ribosomal subunit.

The protein localises to the plastid. Its subcellular location is the chloroplast. Binds 16S rRNA, required for the assembly of 30S particles. In Pyropia yezoensis (Susabi-nori), this protein is Small ribosomal subunit protein uS14c.